We begin with the raw amino-acid sequence, 504 residues long: Light-independent protochlorophyllide reductase subunit B (504 aa).

D36 contributes to the [4Fe-4S] cluster binding site. The active-site Proton donor is D279. 414–415 (GL) contributes to the substrate binding site.

The protein belongs to the ChlB/BchB/BchZ family. Protochlorophyllide reductase is composed of three subunits; BchL, BchN and BchB. Forms a heterotetramer of two BchB and two BchN subunits. It depends on [4Fe-4S] cluster as a cofactor.

It catalyses the reaction chlorophyllide a + oxidized 2[4Fe-4S]-[ferredoxin] + 2 ADP + 2 phosphate = protochlorophyllide a + reduced 2[4Fe-4S]-[ferredoxin] + 2 ATP + 2 H2O. The protein operates within porphyrin-containing compound metabolism; bacteriochlorophyll biosynthesis (light-independent). In terms of biological role, component of the dark-operative protochlorophyllide reductase (DPOR) that uses Mg-ATP and reduced ferredoxin to reduce ring D of protochlorophyllide (Pchlide) to form chlorophyllide a (Chlide). This reaction is light-independent. The NB-protein (BchN-BchB) is the catalytic component of the complex. This is Light-independent protochlorophyllide reductase subunit B from Acidiphilium rubrum.